Consider the following 344-residue polypeptide: Heat-inducible transcription repressor HrcA (344 aa).

This sequence belongs to the HrcA family.

Its function is as follows. Negative regulator of class I heat shock genes (grpE-dnaK-dnaJ and groELS operons). Prevents heat-shock induction of these operons. In Streptococcus pyogenes serotype M1, this protein is Heat-inducible transcription repressor HrcA.